Reading from the N-terminus, the 832-residue chain is Protein P (832 aa).

Residues M1–Q177 are terminal protein domain (TP). Residues K178–L335 form a spacer region. 2 disordered regions span residues F186–S229 and Y275–S305. Residues E336–Q679 are polymerase/reverse transcriptase domain (RT). Positions E346–I589 constitute a Reverse transcriptase domain. Mg(2+)-binding residues include D418, D540, and D541.

Belongs to the hepadnaviridae P protein family.

The enzyme catalyses DNA(n) + a 2'-deoxyribonucleoside 5'-triphosphate = DNA(n+1) + diphosphate. It carries out the reaction Endonucleolytic cleavage to 5'-phosphomonoester.. With respect to regulation, activated by host HSP70 and HSP40 in vitro to be able to bind the epsilon loop of the pgRNA. Because deletion of the RNase H region renders the protein partly chaperone-independent, the chaperones may be needed indirectly to relieve occlusion of the RNA-binding site by this domain. Inhibited by several reverse-transcriptase inhibitors: Lamivudine, Adefovir and Entecavir. Functionally, multifunctional enzyme that converts the viral RNA genome into dsDNA in viral cytoplasmic capsids. This enzyme displays a DNA polymerase activity that can copy either DNA or RNA templates, and a ribonuclease H (RNase H) activity that cleaves the RNA strand of RNA-DNA heteroduplexes in a partially processive 3'- to 5'-endonucleasic mode. Neo-synthesized pregenomic RNA (pgRNA) are encapsidated together with the P protein, and reverse-transcribed inside the nucleocapsid. Initiation of reverse-transcription occurs first by binding the epsilon loop on the pgRNA genome, and is initiated by protein priming, thereby the 5'-end of (-)DNA is covalently linked to P protein. Partial (+)DNA is synthesized from the (-)DNA template and generates the relaxed circular DNA (RC-DNA) genome. After budding and infection, the RC-DNA migrates in the nucleus, and is converted into a plasmid-like covalently closed circular DNA (cccDNA). The activity of P protein does not seem to be necessary for cccDNA generation, and is presumably released from (+)DNA by host nuclear DNA repair machinery. The sequence is that of Protein P from Homo sapiens (Human).